Reading from the N-terminus, the 628-residue chain is CMP-5'-(3-aminopropyl)phosphonate synthase (628 aa).

The mobA-like NTP transferase stretch occupies residues 1–255 (MNENRTFATP…DPGDQRQADF (255 aa)). The segment at 278–628 (GVTDHALLYN…TTEGAGRADG (351 aa)) is decarboxylase. Position 466 is an N6-(pyridoxal phosphate)lysine (Lys-466).

This sequence in the N-terminal section; belongs to the MobA family. It in the C-terminal section; belongs to the class-I pyridoxal-phosphate-dependent aminotransferase family. Requires Mg(2+) as cofactor. The cofactor is pyridoxal 5'-phosphate.

The catalysed reaction is 2-amino-4-phosphonobutanoate + CTP = CMP-5'-(3-amino-3-carboxypropyl)phosphonate + diphosphate. It catalyses the reaction CMP-5'-(3-amino-3-carboxypropyl)phosphonate + H(+) = CMP-5'-(3-aminopropyl)phosphonate + CO2. The protein operates within antibiotic biosynthesis. In terms of biological role, bifunctional cytidylyltransferase/decarboxylase involved in the biosynthesis of the phosphonate antibiotic FR-900098, a potent antimalarial agent that acts as an inhibitor of 1-deoxy-D-xylulose 5-phosphate reductoisomerase (DXR), the first enzyme in the nonmevalonate pathway for isoprenoid biosynthesis. Catalyzes the condensation of 2-amino-4-phosphonobutyrate (2APn) and CTP to form CMP-5'-2APn and then decarboxylates CMP-5'-2APn to yield CMP-5'-(3-aminopropyl)phosphonate (CMP-5'-3APn). In Streptomyces rubellomurinus (strain ATCC 31215), this protein is CMP-5'-(3-aminopropyl)phosphonate synthase.